A 440-amino-acid chain; its full sequence is Beta-1,3-galactosyl-O-glycosyl-glycoprotein beta-1,6-N-acetylglucosaminyltransferase (440 aa).

Residues 1–9 lie on the Cytoplasmic side of the membrane; sequence MKMAGWKKK. The chain crosses the membrane as a helical; Signal-anchor for type II membrane protein span at residues 10-30; sequence LCPGHHLWALGCYMLLAVVSL. Residues 31–440 lie on the Lumenal side of the membrane; it reads RLSLRFKCDV…RHKAIYGTEL (410 aa). 2 N-linked (GlcNAc...) asparagine; by host glycosylation sites follow: Asn-72 and Asn-108. Intrachain disulfides connect Cys-73–Cys-230, Cys-164–Cys-384, Cys-185–Cys-212, and Cys-393–Cys-425.

The protein belongs to the glycosyltransferase 14 family.

Its subcellular location is the host Golgi apparatus membrane. It catalyses the reaction a 3-O-[beta-D-galactosyl-(1-&gt;3)-N-acetyl-alpha-D-galactosaminyl]-L-seryl-[protein] + UDP-N-acetyl-alpha-D-glucosamine = 3-O-{beta-D-galactosyl-(1-&gt;3)-[N-acetyl-beta-D-glucosaminyl-(1-&gt;6)]-N-acetyl-alpha-D-galactosaminyl}-L-seryl-[protein] + UDP + H(+). The catalysed reaction is a 3-O-[beta-D-galactosyl-(1-&gt;3)-N-acetyl-alpha-D-galactosaminyl]-L-threonyl-[protein] + UDP-N-acetyl-alpha-D-glucosamine = a 3-O-{beta-D-galactosyl-(1-&gt;3)-[N-acetyl-beta-D-glucosaminyl-(1-&gt;6)]-N-acetyl-alpha-D-galactosaminyl}-L-threonyl-[protein] + UDP + H(+). The enzyme catalyses a beta-D-Gal-(1-&gt;4)-beta-D-GlcNAc-(1-&gt;3)-beta-D-Gal-(1-&gt;4)-beta-D-GlcNAc derivative + UDP-N-acetyl-alpha-D-glucosamine = a beta-D-Gal-(1-&gt;4)-beta-D-GlcNAc-(1-&gt;3)-[beta-D-GlcNAc-(1-&gt;6)]-beta-D-Gal-(1-&gt;4)-N-acetyl-beta-D-glucosaminyl derivative + UDP + H(+). It carries out the reaction 3-O-[N-acetyl-beta-D-glucosaminyl-(1-&gt;3)-N-acetyl-alpha-D-galactosaminyl]-L-seryl-[protein] + UDP-N-acetyl-alpha-D-glucosamine = 3-O-[N-acetyl-beta-D-glucosaminyl-(1-&gt;3)-[N-acetyl-beta-D-glucosaminyl-(1-&gt;6)]-N-acetyl-alpha-D-galactosaminyl]-L-seryl-[protein] + UDP + H(+). It catalyses the reaction a 3-O-[N-acetyl-beta-D-glucosaminyl-(1-&gt;3)-N-acetyl-alpha-D-galactosaminyl]-L-threonyl-[protein] + UDP-N-acetyl-alpha-D-glucosamine = 3-O-[N-acetyl-beta-D-glucosaminyl-(1-&gt;3)-[N-acetyl-beta-D-glucosaminyl-(1-&gt;6)]-N-acetyl-alpha-D-galactosaminyl]-L-threonyl-[protein] + UDP + H(+). It functions in the pathway protein modification; protein glycosylation. Functionally, non-essential glycosyltransferase that can synthesize all known mucin beta 6 N-acetylglucosaminides. Mediates core 2 and core 4 O-glycan branching, 2 important steps in mucin-type biosynthesis. Has also I-branching enzyme activity by converting linear into branched poly-N-acetyllactosaminoglycans. Contributes to the post-translational modifications of structural proteins. The chain is Beta-1,3-galactosyl-O-glycosyl-glycoprotein beta-1,6-N-acetylglucosaminyltransferase (Bo17) from Bovine herpesvirus 4 (strain LVR140) (BoHV-4).